The following is a 479-amino-acid chain: Nucleoside-diphosphatase uda-1 (479 aa).

Residues 1–7 (MLFPAFS) lie on the Cytoplasmic side of the membrane. A helical; Signal-anchor for type II membrane protein membrane pass occupies residues 8–24 (ILLISFFSLLSVVTTKT). The Lumenal segment spans residues 25 to 479 (QYWCHGDGVL…VLSYFNIISV (455 aa)). Catalysis depends on glutamate 171, which acts as the Proton acceptor. N-linked (GlcNAc...) asparagine glycans are attached at residues asparagine 300 and asparagine 452.

Belongs to the GDA1/CD39 NTPase family. Ca(2+) serves as cofactor. Requires Mg(2+) as cofactor. Mn(2+) is required as a cofactor.

It localises to the endomembrane system. The enzyme catalyses a ribonucleoside 5'-diphosphate + H2O = a ribonucleoside 5'-phosphate + phosphate + H(+). Its function is as follows. Hydrolyzes UDP and GDP but not any other nucleoside di-, mono- or triphosphates. May promote reglycosylation reactions involved in glycoproteins folding and quality control in the endoplasmic reticulum. The sequence is that of Nucleoside-diphosphatase uda-1 (uda-1) from Caenorhabditis elegans.